Consider the following 739-residue polypeptide: Sulfate transporter (739 aa).

Residues 1-44 form a disordered region; that stretch reads MSSENKEQHNLSPRDLPEEAYGFPPELPLGAQRGSSTDLRQFEP. Phosphoserine is present on S12. 2 helical membrane-spanning segments follow: residues 112–132 and 137–157; these read MMSG…YSLL and PIYG…FGTS. A glycan (N-linked (GlcNAc...) asparagine) is linked at N205. The next 2 membrane-spanning stretches (helical) occupy residues 227–247 and 255–275; these read FMAG…VSVY and GFVT…LLGL. Residue N357 is glycosylated (N-linked (GlcNAc...) asparagine). 4 consecutive transmembrane segments (helical) span residues 378–398, 420–440, 455–475, and 524–544; these read LIPN…AITV, AIGF…SAAL, LSAI…APLF, and LLST…CVIL. One can recognise an STAS domain in the interval 568 to 719; it reads TYKNLRSKSG…YSLSEAVAFA (152 aa).

This sequence belongs to the SLC26A/SulP transporter (TC 2.A.53) family. Post-translationally, N-glycosylated. In terms of tissue distribution, cartilage and intestine. Expressed in the kidney (at protein level).

The protein localises to the cell membrane. Its subcellular location is the apical cell membrane. It catalyses the reaction oxalate(in) + sulfate(out) = oxalate(out) + sulfate(in). It carries out the reaction sulfate(out) + 2 chloride(in) = sulfate(in) + 2 chloride(out). The enzyme catalyses oxalate(out) + 2 chloride(in) = oxalate(in) + 2 chloride(out). The catalysed reaction is bromide(in) + chloride(out) = bromide(out) + chloride(in). It catalyses the reaction nitrate(in) + chloride(out) = nitrate(out) + chloride(in). It carries out the reaction iodide(in) + chloride(out) = iodide(out) + chloride(in). In terms of biological role, sulfate transporter which mediates sulfate uptake into chondrocytes in order to maintain adequate sulfation of proteoglycans which is needed for cartilage development. Mediates electroneutral anion exchange of sulfate ions for oxalate ions, sulfate and oxalate ions for chloride and/or hydroxyl ions and chloride ions for bromide, iodide and nitrate ions. The coupling of sulfate transport to both hydroxyl and chloride ions likely serves to ensure transport at both acidic pH when most sulfate uptake is mediated by sulfate-hydroxide exchange and alkaline pH when most sulfate uptake is mediated by sulfate-chloride exchange. Essential for chondrocyte proliferation, differentiation and cell size expansion. The protein is Sulfate transporter (Slc26a2) of Rattus norvegicus (Rat).